The sequence spans 180 residues: Large ribosomal subunit protein uL6 (180 aa).

This sequence belongs to the universal ribosomal protein uL6 family. In terms of assembly, part of the 50S ribosomal subunit.

In terms of biological role, this protein binds to the 23S rRNA, and is important in its secondary structure. It is located near the subunit interface in the base of the L7/L12 stalk, and near the tRNA binding site of the peptidyltransferase center. The chain is Large ribosomal subunit protein uL6 from Thermodesulfovibrio yellowstonii (strain ATCC 51303 / DSM 11347 / YP87).